The sequence spans 1066 residues: Carbamoyl phosphate synthase large chain (1066 aa).

Residues 1 to 401 (MPKNNNIKKV…ALMKAVRSLE (401 aa)) are carboxyphosphate synthetic domain. Positions 129, 169, 175, 176, 208, 210, 215, 241, 242, 243, 284, and 298 each coordinate ATP. Residues 133 to 327 (KNTMEKIGEP…IAKVAAKIAL (195 aa)) enclose the ATP-grasp 1 domain. Mg(2+) is bound by residues Gln-284, Glu-298, and Asn-300. Gln-284, Glu-298, and Asn-300 together coordinate Mn(2+). The interval 402–547 (QNIYSMNYGD…YSCFDSENEV (146 aa)) is oligomerization domain. Residues 548–931 (DATKTKKKVL…ALYKAFLGAG (384 aa)) are carbamoyl phosphate synthetic domain. The region spanning 673 to 863 (DEILEKCCIP…IVSLASKAVL (191 aa)) is the ATP-grasp 2 domain. Residues Arg-709, Lys-748, Leu-750, Glu-754, Gly-779, Ile-780, His-781, Ser-782, Gln-822, and Glu-834 each contribute to the ATP site. Mg(2+) contacts are provided by Gln-822, Glu-834, and Asn-836. Mn(2+) is bound by residues Gln-822, Glu-834, and Asn-836. The 135-residue stretch at 932-1066 (INLPKHKKMI…ELSLIDIARI (135 aa)) folds into the MGS-like domain. The allosteric domain stretch occupies residues 932–1066 (INLPKHKKMI…ELSLIDIARI (135 aa)).

This sequence belongs to the CarB family. Composed of two chains; the small (or glutamine) chain promotes the hydrolysis of glutamine to ammonia, which is used by the large (or ammonia) chain to synthesize carbamoyl phosphate. Tetramer of heterodimers (alpha,beta)4. Mg(2+) is required as a cofactor. Requires Mn(2+) as cofactor.

The catalysed reaction is hydrogencarbonate + L-glutamine + 2 ATP + H2O = carbamoyl phosphate + L-glutamate + 2 ADP + phosphate + 2 H(+). The enzyme catalyses hydrogencarbonate + NH4(+) + 2 ATP = carbamoyl phosphate + 2 ADP + phosphate + 2 H(+). It functions in the pathway amino-acid biosynthesis; L-arginine biosynthesis; carbamoyl phosphate from bicarbonate: step 1/1. It participates in pyrimidine metabolism; UMP biosynthesis via de novo pathway; (S)-dihydroorotate from bicarbonate: step 1/3. Its function is as follows. Large subunit of the glutamine-dependent carbamoyl phosphate synthetase (CPSase). CPSase catalyzes the formation of carbamoyl phosphate from the ammonia moiety of glutamine, carbonate, and phosphate donated by ATP, constituting the first step of 2 biosynthetic pathways, one leading to arginine and/or urea and the other to pyrimidine nucleotides. The large subunit (synthetase) binds the substrates ammonia (free or transferred from glutamine from the small subunit), hydrogencarbonate and ATP and carries out an ATP-coupled ligase reaction, activating hydrogencarbonate by forming carboxy phosphate which reacts with ammonia to form carbamoyl phosphate. The protein is Carbamoyl phosphate synthase large chain of Lachnoclostridium phytofermentans (strain ATCC 700394 / DSM 18823 / ISDg) (Clostridium phytofermentans).